A 187-amino-acid chain; its full sequence is Ribosome-recycling factor (187 aa).

It belongs to the RRF family.

It localises to the cytoplasm. In terms of biological role, responsible for the release of ribosomes from messenger RNA at the termination of protein biosynthesis. May increase the efficiency of translation by recycling ribosomes from one round of translation to another. The polypeptide is Ribosome-recycling factor (Mycoplasmopsis pulmonis (strain UAB CTIP) (Mycoplasma pulmonis)).